A 75-amino-acid chain; its full sequence is Antitoxin MT0312 (75 aa).

Its function is as follows. Antitoxin component of a type II toxin-antitoxin (TA) system. This Mycobacterium tuberculosis (strain CDC 1551 / Oshkosh) protein is Antitoxin MT0312.